Reading from the N-terminus, the 137-residue chain is Diacylglycerol kinase (137 aa).

Residue Glu-42 participates in a divalent metal cation binding. A run of 2 helical transmembrane segments spans residues 49 to 67 and 73 to 89; these read LIAF…ATFF and AILF…NTAI. Glu-83 functions as the Proton acceptor in the catalytic mechanism. An a divalent metal cation-binding site is contributed by Glu-90. Residues 112 to 132 form a helical membrane-spanning segment; that stretch reads SFACLCLIVANGVYAAYVVIF.

The protein belongs to the bacterial diacylglycerol kinase family. Mg(2+) serves as cofactor.

The protein resides in the cell inner membrane. The catalysed reaction is a 1,2-diacyl-sn-glycerol + ATP = a 1,2-diacyl-sn-glycero-3-phosphate + ADP + H(+). Its function is as follows. Catalyzes the ATP-dependent phosphorylation of sn-l,2-diacylglycerol (DAG) to phosphatidic acid. Involved in the recycling of diacylglycerol produced as a by-product during membrane-derived oligosaccharide (MDO) biosynthesis. This chain is Diacylglycerol kinase (dgkA), found in Sinorhizobium sp.